We begin with the raw amino-acid sequence, 424 residues long: ATP-sensitive inward rectifier potassium channel 8 (424 aa).

Residues 1–69 lie on the Cytoplasmic side of the membrane; sequence MLARKSIIPE…IFTTLVDLKW (69 aa). Serine 6 carries the post-translational modification Phosphoserine. Residues 70-94 form a helical membrane-spanning segment; that stretch reads RHTLVIFTMSFLCSWLLFAIMWWLV. Residues 95–126 are Extracellular-facing; the sequence is AFAHGDIYAYMEKGTMEKSGLESAVCVTNVRS. An intramembrane region (helical; Pore-forming) is located at residues 127–138; it reads FTSAFLFSIEVQ. The segment at residues 139–145 is an intramembrane region (pore-forming); it reads VTIGFGG. The short motif at 140-145 is the Selectivity filter element; sequence TIGFGG. Topologically, residues 146–154 are extracellular; sequence RMMTEECPL. Residues 155–176 form a helical membrane-spanning segment; sequence AITVLILQNIVGLIINAVMLGC. The Cytoplasmic portion of the chain corresponds to 177–424; it reads IFMKTAQAHR…PEGNQCPSES (248 aa). Positions 373-409 are disordered; that stretch reads ELSHQNSLRKRNSMRRNNSMRRNNSIRRNNSSLMVPK. Positions 387–404 are enriched in low complexity; it reads RRNNSMRRNNSIRRNNSS.

The protein belongs to the inward rectifier-type potassium channel (TC 1.A.2.1) family. KCNJ8 subfamily. Interacts with ABCC9.

Its subcellular location is the membrane. The catalysed reaction is K(+)(in) = K(+)(out). Inward rectifier potassium channels are characterized by a greater tendency to allow potassium to flow into the cell rather than out of it. Their voltage dependence is regulated by the concentration of extracellular potassium; as external potassium is raised, the voltage range of the channel opening shifts to more positive voltages. The inward rectification is mainly due to the blockage of outward current by internal magnesium. This channel is activated by internal ATP and can be blocked by external barium. Can form a sulfonylurea-sensitive but ATP-insensitive potassium channel with ABCC9. This chain is ATP-sensitive inward rectifier potassium channel 8 (Kcnj8), found in Mus musculus (Mouse).